The following is a 294-amino-acid chain: Tissue factor (294 aa).

A signal peptide spans 1 to 28 (MAILVRPRLLAALAPTFLGCLLLQVIAG). At 29–251 (AGIPEKAFNL…TEQWKSFLGE (223 aa)) the chain is on the extracellular side. Asn-37 and Asn-57 each carry an N-linked (GlcNAc...) asparagine glycan. Cys-75 and Cys-83 are disulfide-bonded. N-linked (GlcNAc...) asparagine glycans are attached at residues Asn-169 and Asn-200. A disulfide bridge connects residues Cys-218 and Cys-241. The short motif at 245 to 247 (WKS) is the WKS motif element. Residues 252–274 (TLIIVGAVVLLATIFIILLSISL) traverse the membrane as a helical segment. Residue Cys-275 is the site of S-palmitoyl cysteine attachment. At 275-294 (CKRRKNRAGQKGKNTPSRLA) the chain is on the cytoplasmic side.

The protein belongs to the tissue factor family. Interacts with HSPE; the interaction, inhibited by heparin, promotes the generation of activated factor X and activates coagulation in the presence of activated factor VII.

The protein localises to the membrane. Initiates blood coagulation by forming a complex with circulating factor VII or VIIa. The [TF:VIIa] complex activates factors IX or X by specific limited proteolysis. TF plays a role in normal hemostasis by initiating the cell-surface assembly and propagation of the coagulation protease cascade. In Mus musculus (Mouse), this protein is Tissue factor (F3).